Here is a 552-residue protein sequence, read N- to C-terminus: Cilia- and flagella- associated protein 210 (552 aa).

Coiled-coil stretches lie at residues 53 to 143 (DEWK…NAKQ), 186 to 307 (EEQL…KKRL), 348 to 409 (IARD…VMKA), and 460 to 488 (TEALVAEKEKEFQDYAREVIELESETTNK). Residues 216 to 238 (KDHLKQIKEHEEEEERRKKYEEK) form a disordered region.

As to quaternary structure, microtubule inner protein component of sperm flagellar doublet microtubules. As to expression, expressed in airway epithelial cells.

The protein resides in the cytoplasm. Its subcellular location is the cytoskeleton. It localises to the cilium axoneme. The protein localises to the flagellum axoneme. In terms of biological role, microtubule inner protein (MIP) part of the dynein-decorated doublet microtubules (DMTs) in cilia axoneme, which is required for motile cilia beating. In Homo sapiens (Human), this protein is Cilia- and flagella- associated protein 210.